Here is a 1039-residue protein sequence, read N- to C-terminus: Probable inorganic carbon transporter subunit DabA 1 (1039 aa).

4 residues coordinate Zn(2+): Cys-462, Asp-464, His-721, and Cys-736.

Belongs to the inorganic carbon transporter (TC 9.A.2) DabA family. As to quaternary structure, forms a complex with DabB. The cofactor is Zn(2+).

The protein resides in the cell inner membrane. Part of an energy-coupled inorganic carbon pump. This is Probable inorganic carbon transporter subunit DabA 1 from Nitrobacter hamburgensis (strain DSM 10229 / NCIMB 13809 / X14).